We begin with the raw amino-acid sequence, 334 residues long: HTH-type transcriptional regulator RegA (334 aa).

In terms of domain architecture, HTH lacI-type spans 1-57; it reads MAASIKDVAREARVSIATVSRVLNNVDVVNEETKKKVMEAIKKLDYRPNIVARSLKT. A DNA-binding region (H-T-H motif) is located at residues 5-24; it reads IKDVAREARVSIATVSRVLN.

Functionally, involved in the regulation of amylase production. This chain is HTH-type transcriptional regulator RegA (regA), found in Clostridium acetobutylicum (strain ATCC 824 / DSM 792 / JCM 1419 / IAM 19013 / LMG 5710 / NBRC 13948 / NRRL B-527 / VKM B-1787 / 2291 / W).